The chain runs to 883 residues: Sodium/sulfate cotransporter 2 (883 aa).

6 helical membrane-spanning segments follow: residues 3-23 (FGWQ…VMAA), 30-50 (VTFT…VTVA), 60-80 (GLLT…TGGL), 106-126 (MCLS…PILI), 139-159 (LLIP…IGTS), and 185-205 (IFDI…FILL). 4 RCK C-terminal domains span residues 211 to 295 (LPGN…EFGL), 317 to 401 (VFTP…SKNN), 406 to 491 (VRAV…FPGL), and 497 to 583 (EQVD…DKSF). A run of 6 helical transmembrane segments spans residues 600-620 (MVIG…GGLK), 624-644 (YIHL…TGCM), 657-677 (VYLT…TGVA), 693-713 (SDGA…ELLT), 774-794 (FAII…FILC), and 802-822 (VWIV…LYFL). A disordered region spans residues 857 to 883 (QASRTGSDGTGSSDSPRALGVPKVITA). Over residues 861 to 871 (TGSDGTGSSDS) the composition is skewed to low complexity.

This sequence belongs to the divalent anion:Na+ symporter (DASS) superfamily. Na+/sulfate symporter (TC 2.A.47.4) family.

The protein localises to the cell membrane. In terms of biological role, na(+)/sulfate cotransporter with a probable high-affinity for sulfate and a proteasome dependent turnover. The chain is Sodium/sulfate cotransporter 2 (SLT2) from Chlamydomonas reinhardtii (Chlamydomonas smithii).